The following is a 212-amino-acid chain: Uracil phosphoribosyltransferase (212 aa).

5-phospho-alpha-D-ribose 1-diphosphate-binding positions include R78, R103, and 130–138 (DPMLATGSS). Uracil contacts are provided by residues I193 and 198 to 200 (GDA). Position 199 (D199) interacts with 5-phospho-alpha-D-ribose 1-diphosphate.

Belongs to the UPRTase family. It depends on Mg(2+) as a cofactor.

It catalyses the reaction UMP + diphosphate = 5-phospho-alpha-D-ribose 1-diphosphate + uracil. The protein operates within pyrimidine metabolism; UMP biosynthesis via salvage pathway; UMP from uracil: step 1/1. Allosterically activated by GTP. Catalyzes the conversion of uracil and 5-phospho-alpha-D-ribose 1-diphosphate (PRPP) to UMP and diphosphate. This is Uracil phosphoribosyltransferase from Pseudomonas syringae pv. tomato (strain ATCC BAA-871 / DC3000).